The primary structure comprises 286 residues: Translocon-associated protein subunit alpha (286 aa).

A signal peptide spans 1-23; it reads MRVLPRLLLLLLLAFPAAVLLRG. Topologically, residues 24–207 are lumenal; that stretch reads GPGGSLVAAQ…EREDGLDGET (184 aa). The segment covering 37 to 75 has biased composition (acidic residues); that stretch reads EDEETVEDSIIEDEDDEAEVEEDEPTDLAEDKEEEDVSG. Residues 37–83 form a disordered region; sequence EDEETVEDSIIEDEDDEAEVEEDEPTDLAEDKEEEDVSGEPEASPSA. N-linked (GlcNAc...) asparagine glycosylation is found at N136 and N191. A helical transmembrane segment spans residues 208-228; that stretch reads IFMYMFLAGLGLLVVVGLHQL. At 229–286 the chain is on the cytoplasmic side; it reads LESRKRKRPIQKVEMGTSSQNDVDMSWIPQETLNQINKASPRRLPRKRAQKRSVGSDE. S247 carries the post-translational modification Phosphoserine. Position 260 is a phosphothreonine (T260). Positions 261 to 286 are disordered; the sequence is LNQINKASPRRLPRKRAQKRSVGSDE. S268 is modified (phosphoserine). A compositionally biased stretch (basic residues) spans 268 to 279; that stretch reads SPRRLPRKRAQK.

The protein belongs to the TRAP-alpha family. In terms of assembly, heterotetramer of TRAP-alpha, TRAP-beta, TRAP-delta and TRAP-gamma. Interacts with palmitoylated calnexin (CALX), the interaction is required for efficient folding of glycosylated proteins. Phosphorylated in its cytoplasmic tail.

The protein resides in the endoplasmic reticulum membrane. TRAP proteins are part of a complex whose function is to bind calcium to the ER membrane and thereby regulate the retention of ER resident proteins. May be involved in the recycling of the translocation apparatus after completion of the translocation process or may function as a membrane-bound chaperone facilitating folding of translocated proteins. The sequence is that of Translocon-associated protein subunit alpha (SSR1) from Canis lupus familiaris (Dog).